Reading from the N-terminus, the 221-residue chain is 7-cyano-7-deazaguanine synthase (221 aa).

10-20 contributes to the ATP binding site; it reads FSGGQDSTTCL. Zn(2+)-binding residues include cysteine 186, cysteine 195, cysteine 198, and cysteine 201.

Belongs to the QueC family. In terms of assembly, homodimer. Zn(2+) serves as cofactor.

It catalyses the reaction 7-carboxy-7-deazaguanine + NH4(+) + ATP = 7-cyano-7-deazaguanine + ADP + phosphate + H2O + H(+). The protein operates within purine metabolism; 7-cyano-7-deazaguanine biosynthesis. In terms of biological role, catalyzes the ATP-dependent conversion of 7-carboxy-7-deazaguanine (CDG) to 7-cyano-7-deazaguanine (preQ(0)). The protein is 7-cyano-7-deazaguanine synthase of Geobacillus sp. (strain WCH70).